Reading from the N-terminus, the 205-residue chain is Urease accessory protein UreG (205 aa).

14-21 (GPVGSGKT) lines the GTP pocket.

It belongs to the SIMIBI class G3E GTPase family. UreG subfamily. Homodimer. UreD, UreF and UreG form a complex that acts as a GTP-hydrolysis-dependent molecular chaperone, activating the urease apoprotein by helping to assemble the nickel containing metallocenter of UreC. The UreE protein probably delivers the nickel.

It localises to the cytoplasm. In terms of biological role, facilitates the functional incorporation of the urease nickel metallocenter. This process requires GTP hydrolysis, probably effectuated by UreG. The polypeptide is Urease accessory protein UreG (Escherichia coli O157:H7).